A 120-amino-acid polypeptide reads, in one-letter code: Glycine cleavage system H protein (120 aa).

Residues 19–101 (DGTVGITDHA…YEGGWLFKLE (83 aa)) form the Lipoyl-binding domain. Position 60 is an N6-lipoyllysine (Lys60).

Belongs to the GcvH family. In terms of assembly, the glycine cleavage system is composed of four proteins: P, T, L and H. It depends on (R)-lipoate as a cofactor.

The glycine cleavage system catalyzes the degradation of glycine. The H protein shuttles the methylamine group of glycine from the P protein to the T protein. This chain is Glycine cleavage system H protein, found in Deinococcus deserti (strain DSM 17065 / CIP 109153 / LMG 22923 / VCD115).